Reading from the N-terminus, the 453-residue chain is Bifunctional protein GlmU (453 aa).

A pyrophosphorylase region spans residues M1–R231. UDP-N-acetyl-alpha-D-glucosamine contacts are provided by residues L10 to G13, K24, Q77, G82 to T83, Y105 to D107, G143, E157, N172, and N229. A Mg(2+)-binding site is contributed by D107. Residue N229 coordinates Mg(2+). Positions A232–D252 are linker. The segment at G253–S453 is N-acetyltransferase. 2 residues coordinate UDP-N-acetyl-alpha-D-glucosamine: R318 and K336. H348 serves as the catalytic Proton acceptor. Y351 and N362 together coordinate UDP-N-acetyl-alpha-D-glucosamine. Acetyl-CoA contacts are provided by residues A365, N371–Y372, S390, S408, and R425.

It in the N-terminal section; belongs to the N-acetylglucosamine-1-phosphate uridyltransferase family. In the C-terminal section; belongs to the transferase hexapeptide repeat family. Homotrimer. Requires Mg(2+) as cofactor.

It localises to the cytoplasm. The enzyme catalyses alpha-D-glucosamine 1-phosphate + acetyl-CoA = N-acetyl-alpha-D-glucosamine 1-phosphate + CoA + H(+). The catalysed reaction is N-acetyl-alpha-D-glucosamine 1-phosphate + UTP + H(+) = UDP-N-acetyl-alpha-D-glucosamine + diphosphate. It functions in the pathway nucleotide-sugar biosynthesis; UDP-N-acetyl-alpha-D-glucosamine biosynthesis; N-acetyl-alpha-D-glucosamine 1-phosphate from alpha-D-glucosamine 6-phosphate (route II): step 2/2. Its pathway is nucleotide-sugar biosynthesis; UDP-N-acetyl-alpha-D-glucosamine biosynthesis; UDP-N-acetyl-alpha-D-glucosamine from N-acetyl-alpha-D-glucosamine 1-phosphate: step 1/1. The protein operates within bacterial outer membrane biogenesis; LPS lipid A biosynthesis. In terms of biological role, catalyzes the last two sequential reactions in the de novo biosynthetic pathway for UDP-N-acetylglucosamine (UDP-GlcNAc). The C-terminal domain catalyzes the transfer of acetyl group from acetyl coenzyme A to glucosamine-1-phosphate (GlcN-1-P) to produce N-acetylglucosamine-1-phosphate (GlcNAc-1-P), which is converted into UDP-GlcNAc by the transfer of uridine 5-monophosphate (from uridine 5-triphosphate), a reaction catalyzed by the N-terminal domain. The polypeptide is Bifunctional protein GlmU (Agrobacterium fabrum (strain C58 / ATCC 33970) (Agrobacterium tumefaciens (strain C58))).